The sequence spans 45 residues: Osteocalcin (45 aa).

Residues 1–41 (AAGELTLTQLESLREVCEANLACEDMMDAQGIIAAYTAYYG) form the Gla domain. Residues glutamate 11, glutamate 15, glutamate 18, and glutamate 24 each coordinate Ca(2+). Glutamate 11, glutamate 15, and glutamate 18 each carry 4-carboxyglutamate. A disulfide bond links cysteine 17 and cysteine 23.

This sequence belongs to the osteocalcin/matrix Gla protein family. Gamma-carboxyglutamate residues are formed by vitamin K dependent carboxylation by GGCX. These residues are essential for the binding of calcium. As to expression, also found in smaller quantities in dentin.

Its subcellular location is the secreted. Its function is as follows. The carboxylated form is one of the main organic components of the bone matrix, which constitutes 1-2% of the total bone protein. The carboxylated form binds strongly to apatite and calcium. The chain is Osteocalcin (bglap) from Lepomis macrochirus (Bluegill).